We begin with the raw amino-acid sequence, 196 residues long: ATP-dependent Clp protease proteolytic subunit (196 aa).

The Nucleophile role is filled by Ser-101. His-126 is an active-site residue.

It belongs to the peptidase S14 family. Component of the chloroplastic Clp protease core complex.

The protein resides in the plastid. It is found in the chloroplast stroma. It carries out the reaction Hydrolysis of proteins to small peptides in the presence of ATP and magnesium. alpha-casein is the usual test substrate. In the absence of ATP, only oligopeptides shorter than five residues are hydrolyzed (such as succinyl-Leu-Tyr-|-NHMec, and Leu-Tyr-Leu-|-Tyr-Trp, in which cleavage of the -Tyr-|-Leu- and -Tyr-|-Trp bonds also occurs).. Cleaves peptides in various proteins in a process that requires ATP hydrolysis. Has a chymotrypsin-like activity. Plays a major role in the degradation of misfolded proteins. The chain is ATP-dependent Clp protease proteolytic subunit from Nasturtium officinale (Watercress).